A 352-amino-acid polypeptide reads, in one-letter code: Biotin synthase (352 aa).

The Radical SAM core domain occupies 44–262 (NRVQVSTLLS…LAVARILMPK (219 aa)). The [4Fe-4S] cluster site is built by cysteine 59, cysteine 63, and cysteine 66. Residues cysteine 103, cysteine 134, cysteine 194, and arginine 266 each contribute to the [2Fe-2S] cluster site.

It belongs to the radical SAM superfamily. Biotin synthase family. As to quaternary structure, homodimer. [4Fe-4S] cluster serves as cofactor. The cofactor is [2Fe-2S] cluster.

The enzyme catalyses (4R,5S)-dethiobiotin + (sulfur carrier)-SH + 2 reduced [2Fe-2S]-[ferredoxin] + 2 S-adenosyl-L-methionine = (sulfur carrier)-H + biotin + 2 5'-deoxyadenosine + 2 L-methionine + 2 oxidized [2Fe-2S]-[ferredoxin]. It functions in the pathway cofactor biosynthesis; biotin biosynthesis; biotin from 7,8-diaminononanoate: step 2/2. Catalyzes the conversion of dethiobiotin (DTB) to biotin by the insertion of a sulfur atom into dethiobiotin via a radical-based mechanism. The polypeptide is Biotin synthase (Pseudomonas putida (strain GB-1)).